A 299-amino-acid polypeptide reads, in one-letter code: Plant-type L-asparaginase (299 aa).

The Nucleophile role is filled by T169. Residues 197 to 200 (RVGD) and 220 to 223 (TGVG) contribute to the substrate site.

Belongs to the Ntn-hydrolase family. In terms of assembly, heterotetramer of two alpha and two beta chains arranged as a dimer of alpha/beta heterodimers. The uncleaved protein forms homodimers. In terms of processing, autocleaved. Generates the alpha and beta subunits. The N-terminal residue of the beta subunit is thought to be responsible for the nucleophile hydrolase activity.

It catalyses the reaction L-asparagine + H2O = L-aspartate + NH4(+). With respect to regulation, divalent metal ions and EDTA do not have significant effect on enzyme activity, indicating that activity is metal-independent. In terms of biological role, catalyzes the hydrolysis of L-asparagine into L-aspartate and ammonia. Also displays D-asparaginase activity, which is about 20% of the L-asparaginase activity. Does not exhibit glutaminase activity. The chain is Plant-type L-asparaginase from Pyrobaculum calidifontis (strain DSM 21063 / JCM 11548 / VA1).